A 70-amino-acid chain; its full sequence is Conotoxin AbVIC (70 aa).

The N-terminal stretch at valine 1–alanine 17 is a signal peptide. The propeptide occupies glutamate 18–arginine 41. The tract at residues threonine 19 to arginine 41 is disordered. 3 disulfide bridges follow: cysteine 43–cysteine 57, cysteine 50–cysteine 61, and cysteine 56–cysteine 68.

It belongs to the conotoxin O1 superfamily. Expressed by the venom duct.

It localises to the secreted. The chain is Conotoxin AbVIC from Conus abbreviatus (Abbreviated cone).